A 945-amino-acid chain; its full sequence is 26S proteasome regulatory subunit RPN2 (945 aa).

S2 carries the post-translational modification N-acetylserine. PC repeat units follow at residues 366–399 (TATA…SSRF), 403–440 (GSLY…EDVD), 445–479 (GASL…TSGE), 480–514 (AAAL…GNIT), 516–549 (GLAV…LLRY), 550–585 (GGAF…DVRR), 586–618 (AAVI…AHVR), 620–654 (GTAF…FVRQ), 655–692 (AAMI…KHQE), and 698–734 (GACV…VGLV). A Phosphothreonine modification is found at T801. A compositionally biased stretch (basic residues) spans 810-819 (AKARAKKTKK). The disordered stretch occupies residues 810–851 (AKARAKKTKKEKGPNEEEKKKEHEEKEKERETNKKGIKETKE). Residues 820–851 (EKGPNEEEKKKEHEEKEKERETNKKGIKETKE) are compositionally biased toward basic and acidic residues. The residue at position 932 (T932) is a Phosphothreonine.

The protein belongs to the proteasome subunit S1 family. In terms of assembly, interacts with UBR1. Post-translationally, N-acetylated by NAT1.

Acts as a regulatory subunit of the 26S proteasome which is involved in the ATP-dependent degradation of ubiquitinated proteins. This Saccharomyces cerevisiae (strain ATCC 204508 / S288c) (Baker's yeast) protein is 26S proteasome regulatory subunit RPN2 (RPN2).